A 165-amino-acid chain; its full sequence is Glutamyl-tRNA(Gln) amidotransferase subunit F, mitochondrial (165 aa).

Over residues 137–153 the composition is skewed to basic and acidic residues; that stretch reads VSDQRGERGFDTSELRT. The segment at 137-165 is disordered; that stretch reads VSDQRGERGFDTSELRTRINRAKSTAEKE.

The protein belongs to the GatF family. In terms of assembly, subunit of the heterotrimeric GatFAB amidotransferase (AdT) complex, composed of A, B and F subunits.

It is found in the mitochondrion inner membrane. It catalyses the reaction L-glutamyl-tRNA(Gln) + L-glutamine + ATP + H2O = L-glutaminyl-tRNA(Gln) + L-glutamate + ADP + phosphate + H(+). Functionally, allows the formation of correctly charged Gln-tRNA(Gln) through the transamidation of misacylated Glu-tRNA(Gln) in the mitochondria. The reaction takes place in the presence of glutamine and ATP through an activated gamma-phospho-Glu-tRNA(Gln). Required for proper protein synthesis within the mitochondrion. The chain is Glutamyl-tRNA(Gln) amidotransferase subunit F, mitochondrial from Clavispora lusitaniae (strain ATCC 42720) (Yeast).